The primary structure comprises 146 residues: UPF0178 protein BCA_3127 (146 aa).

The protein belongs to the UPF0178 family.

The polypeptide is UPF0178 protein BCA_3127 (Bacillus cereus (strain 03BB102)).